The primary structure comprises 485 residues: ATP synthase subunit beta 2 (485 aa).

Positions Met1–Gln10 are enriched in basic and acidic residues. Positions Met1–Ala27 are disordered. Residues Ile11 to Glu24 are compositionally biased toward polar residues. ATP is bound at residue Gly177–Thr184.

This sequence belongs to the ATPase alpha/beta chains family. In terms of assembly, F-type ATPases have 2 components, CF(1) - the catalytic core - and CF(0) - the membrane proton channel. CF(1) has five subunits: alpha(3), beta(3), gamma(1), delta(1), epsilon(1). CF(0) has three main subunits: a(1), b(2) and c(9-12). The alpha and beta chains form an alternating ring which encloses part of the gamma chain. CF(1) is attached to CF(0) by a central stalk formed by the gamma and epsilon chains, while a peripheral stalk is formed by the delta and b chains.

Its subcellular location is the cell inner membrane. The enzyme catalyses ATP + H2O + 4 H(+)(in) = ADP + phosphate + 5 H(+)(out). Produces ATP from ADP in the presence of a proton gradient across the membrane. The catalytic sites are hosted primarily by the beta subunits. In Nitrosomonas eutropha (strain DSM 101675 / C91 / Nm57), this protein is ATP synthase subunit beta 2.